A 392-amino-acid polypeptide reads, in one-letter code: Phosphoglycerate kinase (392 aa).

Residues 21–23 (DFN), R36, 59–62 (HLGR), R113, and R146 each bind substrate. Residues K197, E319, and 345–348 (GGDT) contribute to the ATP site.

The protein belongs to the phosphoglycerate kinase family. Monomer.

It localises to the cytoplasm. It carries out the reaction (2R)-3-phosphoglycerate + ATP = (2R)-3-phospho-glyceroyl phosphate + ADP. Its pathway is carbohydrate degradation; glycolysis; pyruvate from D-glyceraldehyde 3-phosphate: step 2/5. In Francisella tularensis subsp. holarctica (strain FTNF002-00 / FTA), this protein is Phosphoglycerate kinase.